Here is a 57-residue protein sequence, read N- to C-terminus: uncharacterized protein (57 aa).

Residues 4 to 26 (FMPIRVFLYSYVIINSLLSSFFH) form a helical membrane-spanning segment.

Its subcellular location is the membrane. This is an uncharacterized protein from Saccharomyces cerevisiae (strain ATCC 204508 / S288c) (Baker's yeast).